Here is an 85-residue protein sequence, read N- to C-terminus: Small ribosomal subunit protein uS17 (85 aa).

Belongs to the universal ribosomal protein uS17 family. Part of the 30S ribosomal subunit.

Functionally, one of the primary rRNA binding proteins, it binds specifically to the 5'-end of 16S ribosomal RNA. This Mesoplasma florum (strain ATCC 33453 / NBRC 100688 / NCTC 11704 / L1) (Acholeplasma florum) protein is Small ribosomal subunit protein uS17.